The following is a 231-amino-acid chain: Cytochrome c oxidase subunit 2 (231 aa).

Topologically, residues 1–14 (MAHPAQLGLQNATS) are mitochondrial intermembrane. Residues 15–45 (PIMEELIAFHDHALMIIFLISSLVLYIISLM) form a helical membrane-spanning segment. Topologically, residues 46–59 (LTTKLTHTSTMNAQ) are mitochondrial matrix. The helical transmembrane segment at 60–87 (EIEMVWTILPAIILIMIALPSLRILYMT) threads the bilayer. Residues 88–231 (DEFNKPYLTL…WASYLYIVSL (144 aa)) lie on the Mitochondrial intermembrane side of the membrane. 6 residues coordinate Cu cation: histidine 161, cysteine 196, glutamate 198, cysteine 200, histidine 204, and methionine 207. Position 198 (glutamate 198) interacts with Mg(2+).

This sequence belongs to the cytochrome c oxidase subunit 2 family. In terms of assembly, component of the cytochrome c oxidase (complex IV, CIV), a multisubunit enzyme composed of 14 subunits. The complex is composed of a catalytic core of 3 subunits MT-CO1, MT-CO2 and MT-CO3, encoded in the mitochondrial DNA, and 11 supernumerary subunits COX4I, COX5A, COX5B, COX6A, COX6B, COX6C, COX7A, COX7B, COX7C, COX8 and NDUFA4, which are encoded in the nuclear genome. The complex exists as a monomer or a dimer and forms supercomplexes (SCs) in the inner mitochondrial membrane with NADH-ubiquinone oxidoreductase (complex I, CI) and ubiquinol-cytochrome c oxidoreductase (cytochrome b-c1 complex, complex III, CIII), resulting in different assemblies (supercomplex SCI(1)III(2)IV(1) and megacomplex MCI(2)III(2)IV(2)). Found in a complex with TMEM177, COA6, COX18, COX20, SCO1 and SCO2. Interacts with TMEM177 in a COX20-dependent manner. Interacts with COX20. Interacts with COX16. The cofactor is Cu cation.

Its subcellular location is the mitochondrion inner membrane. The enzyme catalyses 4 Fe(II)-[cytochrome c] + O2 + 8 H(+)(in) = 4 Fe(III)-[cytochrome c] + 2 H2O + 4 H(+)(out). In terms of biological role, component of the cytochrome c oxidase, the last enzyme in the mitochondrial electron transport chain which drives oxidative phosphorylation. The respiratory chain contains 3 multisubunit complexes succinate dehydrogenase (complex II, CII), ubiquinol-cytochrome c oxidoreductase (cytochrome b-c1 complex, complex III, CIII) and cytochrome c oxidase (complex IV, CIV), that cooperate to transfer electrons derived from NADH and succinate to molecular oxygen, creating an electrochemical gradient over the inner membrane that drives transmembrane transport and the ATP synthase. Cytochrome c oxidase is the component of the respiratory chain that catalyzes the reduction of oxygen to water. Electrons originating from reduced cytochrome c in the intermembrane space (IMS) are transferred via the dinuclear copper A center (CU(A)) of subunit 2 and heme A of subunit 1 to the active site in subunit 1, a binuclear center (BNC) formed by heme A3 and copper B (CU(B)). The BNC reduces molecular oxygen to 2 water molecules using 4 electrons from cytochrome c in the IMS and 4 protons from the mitochondrial matrix. This chain is Cytochrome c oxidase subunit 2 (MT-CO2), found in Lagothrix lagotricha (Brown woolly monkey).